A 128-amino-acid chain; its full sequence is MRHRKSGRKLNRNSSHRKAMFRNMSASLFEHEMIKTTVAKAKELRGVAEPLITLAKQDSVHNRRIAFSRLRDKAAVGKLFSELGPRYESRPGGYVRILKCGFRPGDNAPMAYVELVDRPQVESTESED.

The protein belongs to the bacterial ribosomal protein bL17 family. In terms of assembly, part of the 50S ribosomal subunit. Contacts protein L32.

This chain is Large ribosomal subunit protein bL17, found in Hydrogenovibrio crunogenus (strain DSM 25203 / XCL-2) (Thiomicrospira crunogena).